The chain runs to 173 residues: Cytochrome c homolog (173 aa).

Residues 1–8 (MSGKELNK) are Cytoplasmic-facing. The chain crosses the membrane as a helical; Signal-anchor span at residues 9-29 (IVAAILFASLIAMMVGFIANI). The Periplasmic portion of the chain corresponds to 30–173 (LYKPVLEPKH…LFLKTYVHDK (144 aa)). Cysteine 82, cysteine 85, histidine 86, and methionine 148 together coordinate heme c.

It belongs to the cytochrome c family. In terms of processing, binds 1 heme c group covalently per subunit.

It is found in the cell membrane. In terms of biological role, may be involved in electron transfer from bc1 complex to aa3. This is Cytochrome c homolog (cycM) from Rickettsia bellii (strain RML369-C).